A 259-amino-acid polypeptide reads, in one-letter code: Thiazole synthase (259 aa).

K99 (schiff-base intermediate with DXP) is an active-site residue. Residues G161, 187-188 (AG), and 209-219 (NSAIACAQNPI) each bind 1-deoxy-D-xylulose 5-phosphate.

The protein belongs to the ThiG family. Homotetramer. Forms heterodimers with either ThiH or ThiS.

It localises to the cytoplasm. It carries out the reaction [ThiS sulfur-carrier protein]-C-terminal-Gly-aminoethanethioate + 2-iminoacetate + 1-deoxy-D-xylulose 5-phosphate = [ThiS sulfur-carrier protein]-C-terminal Gly-Gly + 2-[(2R,5Z)-2-carboxy-4-methylthiazol-5(2H)-ylidene]ethyl phosphate + 2 H2O + H(+). It participates in cofactor biosynthesis; thiamine diphosphate biosynthesis. Catalyzes the rearrangement of 1-deoxy-D-xylulose 5-phosphate (DXP) to produce the thiazole phosphate moiety of thiamine. Sulfur is provided by the thiocarboxylate moiety of the carrier protein ThiS. In vitro, sulfur can be provided by H(2)S. The chain is Thiazole synthase from Aliarcobacter butzleri (strain RM4018) (Arcobacter butzleri).